Here is a 520-residue protein sequence, read N- to C-terminus: MGPTRKPNVCSRLSRRALGCFSRDAGVVQRTNLGILRALVCQESTKFKNVWTTHSRSPIAYERGRIYFDNYRRCVSSVASEPRKLYEMPKCSKSEKIEDALLWECPVGDILPNSSDYKSSLIALTAHNWLLRISATTGKILEKIYLAPYCKFRYLSWDTPQEVIAVKSAQNRGSAVARQAGIQQHVLLYLAVFRVLPFSLVGILEINKKIFGNVTDATLSHGILIVMYSSGLVRLYSFQTIAEQFMQQKLDLGCACRWGGTTGTVGEAPFGIPCNIKITDMPPLLFEVSSLENAFQIGGHPWHYIVTPNKKKQKGVFHICALKDNSLAKNGIQEMDCCSLESDWIYFHPDASGRIIHVGPNQVKVLKLTEIENNSSQHQISEDFVILANRENHKNENVLTVTASGRVVKKSFNLLDDDPEQETFKIVDYEDELDLLSVVAVTQIDAEGKAHLDFHCNEYGTLLKSIPLVESWDVTYSHEVYFDRDLVLHIEQKPNRVFSCYVYQMICDTGEEEETINRSC.

2 helical membrane-spanning segments follow: residues 186 to 206 (VLLYLAVFRVLPFSLVGILEI) and 222 to 242 (GILIVMYSSGLVRLYSFQTIA).

As to quaternary structure, interacts with DDB1, CUL4A and CUL4B. In terms of tissue distribution, ubiquitously expressed.

Its subcellular location is the membrane. It localises to the nucleus. The protein localises to the nucleolus. The protein operates within protein modification; protein ubiquitination. Its function is as follows. May function as a substrate receptor for CUL4-DDB1 E3 ubiquitin-protein ligase complex. The polypeptide is DDB1- and CUL4-associated factor 17 (DCAF17) (Homo sapiens (Human)).